Reading from the N-terminus, the 480-residue chain is MAFYSYNSFLAIFWTRLPGHSVYPSCSHFPSLAFLHLPDSHLRTAYIKNCGSRKYSYPSLTGNNKVHPLRTRLPQKLHTTCWLQHVPGKPQLEQTGKPKAASPQPTKEAKTETTEEKRSLRQKIVNELKYYYKGFSLLWIDTKVAARIVWRLLHGNALTRRERRRLLRTCADVFRLVPFMVFIIVPFMEFLIPVFLKLFPDMLPSTFESESKKEEKQKKTMAAKLEIAKFLQETMTEMARRNRAKLGDASSQLSSYVKQVQTGHKPSTKEIVRFSKLFKDQLALEHLDRPQLVALCKLLELQTFGTNNLLRFQLLMTLKSIKADDEIIAKEGVKALSVSELQSACRARGMRSLGLTEEQLCQQLTGWLDLHLKENVPPSLLLLSRTFYLIDVKPKPIELPPNIETPKPNLGIPTPPPPESKENLTDSAPQLKGTKDEEFIQLPPVPSSLIAPAATISKEAILQAKSQETSQNSKADSKGA.

The transit peptide at 1-25 (MAFYSYNSFLAIFWTRLPGHSVYPS) directs the protein to the mitochondrion. Topologically, residues 26–175 (CSHFPSLAFL…LLRTCADVFR (150 aa)) are mitochondrial intermembrane. Residues 88–118 (GKPQLEQTGKPKAASPQPTKEAKTETTEEKR) are disordered. The span at 107 to 118 (KEAKTETTEEKR) shows a compositional bias: basic and acidic residues. Residues 176–196 (LVPFMVFIIVPFMEFLIPVFL) form a helical membrane-spanning segment. Over 197 to 480 (KLFPDMLPST…QNSKADSKGA (284 aa)) the chain is Mitochondrial matrix. One can recognise a Letm1 RBD domain in the interval 219–436 (KTMAAKLEIA…SAPQLKGTKD (218 aa)). The disordered stretch occupies residues 398–444 (ELPPNIETPKPNLGIPTPPPPESKENLTDSAPQLKGTKDEEFIQLPP).

The protein resides in the mitochondrion inner membrane. In Mus musculus (Mouse), this protein is LETM1 domain-containing protein LETM2, mitochondrial (Letm2).